The following is a 133-amino-acid chain: C-C motif chemokine 21b (133 aa).

The N-terminal stretch at 1-23 (MAQMMTLSLLSLVLALCIPWTQG) is a signal peptide. 3 disulfide bridges follow: Cys31–Cys57, Cys32–Cys75, and Cys103–Cys122. The tract at residues 87 to 133 (MRRLDQPPAPGKQSPGCRKNRGTSKSGKKGKGSKGCKRTEQTQPSRG) is disordered. The C-terminal basic extension stretch occupies residues 98–133 (KQSPGCRKNRGTSKSGKKGKGSKGCKRTEQTQPSRG). Basic residues predominate over residues 104 to 122 (RKNRGTSKSGKKGKGSKGC).

The protein belongs to the intercrine beta (chemokine CC) family. Binds to CCR7 and to CXCR3. Interacts with PDPN; relocalizes PDPN to the basolateral membrane. Interacts with GPR174. In terms of tissue distribution, expressed strongly in lung, spleen, thymus, peripheral and mesentric lymph nodes. Also expressed in the testis, kidney, liver, and heart.

The protein resides in the secreted. Inhibits hemopoiesis and stimulates chemotaxis. Chemotactic in vitro for thymocytes and activated T-cells, but not for B-cells, macrophages, or neutrophils. Potent mesangial cell chemoattractant. Shows preferential activity towards naive T-cells. May play a role in mediating homing of lymphocytes to secondary lymphoid organs. This Mus musculus (Mouse) protein is C-C motif chemokine 21b (Ccl21b).